The primary structure comprises 327 residues: MENVFDYEDIQLIPAKCIVNSRSECDTTVTLGKHKFKLPVVPANMQTIIDERIATYLAENNYFYIMHRFQPEKRISFIRDMQSRGLIASISVGVKEDEYEFVQQLAAEHLTPEYITIDIAHGHSNAVINMIQHIKKHLPESFVIAGNVGTPEAVRELENAGADATKVGIGPGKVCITKIKTGFGTGGWQLAALRWCAKAASKPIIADGGIRTNGDVAKSIRFGATMVMIGSLFAGHEESPGETIEKDGKLYKEYFGSASEFQKGEKKNVEGKKMFVEHKGSLEDTLIEMEQDLQSSISYAGGTKLDSIRTVDYVVVKNSIFNGDKVY.

Cys175 (thioimidate intermediate) is an active-site residue. 204–227 (IIADGGIRTNGDVAKSIRFGATMV) contributes to the NADP(+) binding site.

This sequence belongs to the IMPDH/GMPR family. GuaC type 2 subfamily.

It carries out the reaction IMP + NH4(+) + NADP(+) = GMP + NADPH + 2 H(+). In terms of biological role, catalyzes the irreversible NADPH-dependent deamination of GMP to IMP. It functions in the conversion of nucleobase, nucleoside and nucleotide derivatives of G to A nucleotides, and in maintaining the intracellular balance of A and G nucleotides. This Bacillus cereus (strain ZK / E33L) protein is GMP reductase.